The chain runs to 140 residues: L-fucose mutarotase (140 aa).

His-22 (proton donor) is an active-site residue. Substrate-binding positions include Asp-30, Arg-107, and 129–131 (YGN).

This sequence belongs to the RbsD / FucU family. FucU mutarotase subfamily. Homodecamer.

Its subcellular location is the cytoplasm. The catalysed reaction is alpha-L-fucose = beta-L-fucose. Its pathway is carbohydrate metabolism; L-fucose metabolism. Its function is as follows. Involved in the anomeric conversion of L-fucose. This is L-fucose mutarotase from Salmonella typhimurium (strain LT2 / SGSC1412 / ATCC 700720).